A 205-amino-acid polypeptide reads, in one-letter code: Homeobox protein goosecoid-2 (205 aa).

2 disordered regions span residues 33–58 and 185–205; these read SLPA…EPGA and KRAS…KGSC. Residues 126-185 constitute a DNA-binding region (homeobox); the sequence is TRRHRTIFSEEQLQALEALFVQNQYPDVSTRERLAGRIRLREERVEVWFKNRRAKWRHQK.

It belongs to the paired homeobox family. Bicoid subfamily. Detected in adult testis and pituitary, and in 9-10 week fetal tissue (thorax). Probably expressed in other tissues at low levels.

It is found in the nucleus. Functionally, may have a role in development. May regulate its own transcription. May bind the bicoid consensus sequence TAATCC. This is Homeobox protein goosecoid-2 (GSC2) from Homo sapiens (Human).